A 132-amino-acid chain; its full sequence is Small ribosomal subunit protein uS8 (132 aa).

Belongs to the universal ribosomal protein uS8 family. Part of the 30S ribosomal subunit. Contacts proteins S5 and S12.

Functionally, one of the primary rRNA binding proteins, it binds directly to 16S rRNA central domain where it helps coordinate assembly of the platform of the 30S subunit. The chain is Small ribosomal subunit protein uS8 from Corynebacterium jeikeium (strain K411).